The primary structure comprises 296 residues: Light-independent protochlorophyllide reductase iron-sulfur ATP-binding protein (296 aa).

Residues 10–15 (GIGKST) and lysine 39 each bind ATP. Serine 14 provides a ligand contact to Mg(2+). Residues cysteine 95 and cysteine 129 each coordinate [4Fe-4S] cluster. 180 to 181 (NR) provides a ligand contact to ATP.

It belongs to the NifH/BchL/ChlL family. In terms of assembly, homodimer. Protochlorophyllide reductase is composed of three subunits; ChlL, ChlN and ChlB. It depends on [4Fe-4S] cluster as a cofactor.

The protein localises to the plastid. It localises to the chloroplast. It catalyses the reaction chlorophyllide a + oxidized 2[4Fe-4S]-[ferredoxin] + 2 ADP + 2 phosphate = protochlorophyllide a + reduced 2[4Fe-4S]-[ferredoxin] + 2 ATP + 2 H2O. It participates in porphyrin-containing compound metabolism; chlorophyll biosynthesis (light-independent). In terms of biological role, component of the dark-operative protochlorophyllide reductase (DPOR) that uses Mg-ATP and reduced ferredoxin to reduce ring D of protochlorophyllide (Pchlide) to form chlorophyllide a (Chlide). This reaction is light-independent. The L component serves as a unique electron donor to the NB-component of the complex, and binds Mg-ATP. The sequence is that of Light-independent protochlorophyllide reductase iron-sulfur ATP-binding protein from Chlorokybus atmophyticus (Soil alga).